The sequence spans 901 residues: Protein translocase subunit SecA (901 aa).

ATP-binding positions include Q87, 105 to 109 (GEGKT), and D512. The segment at 859-901 (HQDDDSAAAAALAAQTGERKVGRNDPCPCGSGKKYKQCHGRLQ) is disordered. 4 residues coordinate Zn(2+): C885, C887, C896, and H897. The segment covering 891–901 (KKYKQCHGRLQ) has biased composition (basic residues).

It belongs to the SecA family. As to quaternary structure, monomer and homodimer. Part of the essential Sec protein translocation apparatus which comprises SecA, SecYEG and auxiliary proteins SecDF-YajC and YidC. Zn(2+) serves as cofactor.

It is found in the cell inner membrane. Its subcellular location is the cytoplasm. The enzyme catalyses ATP + H2O + cellular proteinSide 1 = ADP + phosphate + cellular proteinSide 2.. Part of the Sec protein translocase complex. Interacts with the SecYEG preprotein conducting channel. Has a central role in coupling the hydrolysis of ATP to the transfer of proteins into and across the cell membrane, serving both as a receptor for the preprotein-SecB complex and as an ATP-driven molecular motor driving the stepwise translocation of polypeptide chains across the membrane. The protein is Protein translocase subunit SecA of Escherichia coli O127:H6 (strain E2348/69 / EPEC).